The primary structure comprises 94 residues: Pyrimidine/purine nucleoside phosphorylase (94 aa).

Belongs to the nucleoside phosphorylase PpnP family.

It catalyses the reaction a purine D-ribonucleoside + phosphate = a purine nucleobase + alpha-D-ribose 1-phosphate. The enzyme catalyses adenosine + phosphate = alpha-D-ribose 1-phosphate + adenine. It carries out the reaction cytidine + phosphate = cytosine + alpha-D-ribose 1-phosphate. The catalysed reaction is guanosine + phosphate = alpha-D-ribose 1-phosphate + guanine. It catalyses the reaction inosine + phosphate = alpha-D-ribose 1-phosphate + hypoxanthine. The enzyme catalyses thymidine + phosphate = 2-deoxy-alpha-D-ribose 1-phosphate + thymine. It carries out the reaction uridine + phosphate = alpha-D-ribose 1-phosphate + uracil. The catalysed reaction is xanthosine + phosphate = alpha-D-ribose 1-phosphate + xanthine. Its function is as follows. Catalyzes the phosphorolysis of diverse nucleosides, yielding D-ribose 1-phosphate and the respective free bases. Can use uridine, adenosine, guanosine, cytidine, thymidine, inosine and xanthosine as substrates. Also catalyzes the reverse reactions. The protein is Pyrimidine/purine nucleoside phosphorylase of Citrobacter koseri (strain ATCC BAA-895 / CDC 4225-83 / SGSC4696).